The sequence spans 315 residues: Probable NAD(P)H-dependent D-xylose reductase xyl1 (315 aa).

Y50 (proton donor) is an active-site residue. H112 contacts substrate. Residues 166–167 (SN), 215–224 (SSFGPLSFVE), and 271–281 (KSNDPTRLAQN) contribute to the NAD(+) site.

The protein belongs to the aldo/keto reductase family.

It carries out the reaction xylitol + NAD(+) = D-xylose + NADH + H(+). The enzyme catalyses xylitol + NADP(+) = D-xylose + NADPH + H(+). Its pathway is carbohydrate metabolism; D-xylose degradation. In terms of biological role, catalyzes the initial reaction in the xylose utilization pathway by reducing D-xylose into xylitol. Xylose is a major component of hemicelluloses such as xylan. Most fungi utilize D-xylose via three enzymatic reactions, xylose reductase (XR), xylitol dehydrogenase (XDH), and xylulokinase, to form xylulose 5-phosphate, which enters pentose phosphate pathway. In Aspergillus fumigatus (strain ATCC MYA-4609 / CBS 101355 / FGSC A1100 / Af293) (Neosartorya fumigata), this protein is Probable NAD(P)H-dependent D-xylose reductase xyl1 (xyl1).